Here is a 347-residue protein sequence, read N- to C-terminus: Protein-glutamate methylesterase/protein-glutamine glutaminase 2 (347 aa).

One can recognise a Response regulatory domain in the interval 2–119 (RVMIVDDSAV…LGGADLYRKD (118 aa)). Asp-52 carries the 4-aspartylphosphate modification. The segment at 131 to 153 (AARPAPPQAAPRPTLAPPSSDPA) is disordered. The span at 134 to 150 (PAPPQAAPRPTLAPPSS) shows a compositional bias: pro residues. The CheB-type methylesterase domain occupies 152–346 (PAGPIEAVVV…PYIASRARSV (195 aa)). Active-site residues include Ser-164, His-191, and Asp-288.

Belongs to the CheB family. In terms of processing, phosphorylated by CheA. Phosphorylation of the N-terminal regulatory domain activates the methylesterase activity.

The protein localises to the cytoplasm. It catalyses the reaction [protein]-L-glutamate 5-O-methyl ester + H2O = L-glutamyl-[protein] + methanol + H(+). The catalysed reaction is L-glutaminyl-[protein] + H2O = L-glutamyl-[protein] + NH4(+). Involved in chemotaxis. Part of a chemotaxis signal transduction system that modulates chemotaxis in response to various stimuli. Catalyzes the demethylation of specific methylglutamate residues introduced into the chemoreceptors (methyl-accepting chemotaxis proteins or MCP) by CheR. Also mediates the irreversible deamidation of specific glutamine residues to glutamic acid. The protein is Protein-glutamate methylesterase/protein-glutamine glutaminase 2 of Caulobacter vibrioides (strain ATCC 19089 / CIP 103742 / CB 15) (Caulobacter crescentus).